The sequence spans 967 residues: A disintegrin and metalloproteinase with thrombospondin motifs 1 (967 aa).

A signal peptide spans 1-54; the sequence is MQPEVPLGSGKLKPCSDMGDIQRAAKFRSSQSAHMLLLLLASITMLLCVRGAHG. Positions 55–252 are excised as a propeptide; it reads RPTEEDEELV…TGPGSIRKKR (198 aa). Positions 198–252 are disordered; it reads RGSGGAKCGVMDEETLPTSNSGRESQNTPDQWPLRNPTPQGAGKPTGPGSIRKKR. A Cysteine switch motif is present at residues 203 to 210; sequence AKCGVMDE. Cys205 contacts Zn(2+). The segment covering 213 to 227 has biased composition (polar residues); that stretch reads LPTSNSGRESQNTPD. The region spanning 258–467 is the Peptidase M12B domain; sequence RYVETMLVAD…GHGECLMDKP (210 aa). Residues Glu261, Asp344, and Asp351 each contribute to the Ca(2+) site. 4 disulfide bridges follow: Cys333–Cys385, Cys362–Cys367, Cys379–Cys462, and Cys417–Cys446. A Zn(2+)-binding site is contributed by His401. The active site involves Glu402. The Zn(2+) site is built by His405 and His411. Residues Cys462 and Asp465 each contribute to the Ca(2+) site. The Disintegrin domain occupies 476-558; it reads DLPGTLYDAN…TDMKHFATPV (83 aa). Intrachain disulfides connect Cys488/Cys511, Cys499/Cys521, Cys506/Cys540, and Cys534/Cys545. Asn547 carries an N-linked (GlcNAc...) asparagine glycan. The region spanning 559–614 is the TSP type-1 1 domain; the sequence is HGSWGPWGPWGDCSRTCGGGVQYTMRECDNPVPKNGGKYCEGKRVRYRSCNIEDCP. 3 cysteine pairs are disulfide-bonded: Cys571–Cys608, Cys575–Cys613, and Cys586–Cys598. Asn720, Asn764, and Asn782 each carry an N-linked (GlcNAc...) asparagine glycan. The spacer stretch occupies residues 725 to 857; that stretch reads KKISGTVTST…PFNAIPTFSE (133 aa). 2 TSP type-1 domains span residues 854–910 and 911–967; these read TFSE…LPCP and RWQV…TQCS. The N-linked (GlcNAc...) asparagine glycan is linked to Asn945.

Requires Zn(2+) as cofactor. The precursor is cleaved by a furin endopeptidase. In terms of processing, glycosylated. Can be O-fucosylated by POFUT2 on a serine or a threonine residue found within the consensus sequence C1-X(2)-(S/T)-C2-G of the TSP type-1 repeat domains where C1 and C2 are the first and second cysteine residue of the repeat, respectively. Fucosylated repeats can then be further glycosylated by the addition of a beta-1,3-glucose residue by the glucosyltransferase, B3GALTL. Fucosylation mediates the efficient secretion of ADAMTS family members. Can also be C-glycosylated with one or two mannose molecules on tryptophan residues within the consensus sequence W-X-X-W of the TPRs, and N-glycosylated. These other glycosylations can also facilitate secretion.

The protein localises to the secreted. It localises to the extracellular space. Its subcellular location is the extracellular matrix. Functionally, metalloprotease which cleaves aggrecan, a cartilage proteoglycan, at the '1683-Glu-|-Leu-1684' site (within the chondroitin sulfate attachment domain), and may be involved in its turnover. Also cleaves COMP. Has angiogenic inhibitor activity. May play a critical role in follicular rupture. This is A disintegrin and metalloproteinase with thrombospondin motifs 1 (Adamts1) from Rattus norvegicus (Rat).